The sequence spans 209 residues: Outer-membrane lipoprotein carrier protein (209 aa).

A signal peptide spans 1-21 (MHRQLRYAVLATALFASTAFA).

The protein belongs to the LolA family. As to quaternary structure, monomer.

Its subcellular location is the periplasm. Functionally, participates in the translocation of lipoproteins from the inner membrane to the outer membrane. Only forms a complex with a lipoprotein if the residue after the N-terminal Cys is not an aspartate (The Asp acts as a targeting signal to indicate that the lipoprotein should stay in the inner membrane). In Xanthomonas campestris pv. campestris (strain 8004), this protein is Outer-membrane lipoprotein carrier protein.